The following is an 81-amino-acid chain: ATP synthase subunit c (81 aa).

The next 2 helical transmembrane spans lie at 14–34 (YLGA…IGTV) and 60–80 (LAFA…LLFV).

Belongs to the ATPase C chain family. F-type ATPases have 2 components, F(1) - the catalytic core - and F(0) - the membrane proton channel. F(1) has five subunits: alpha(3), beta(3), gamma(1), delta(1), epsilon(1). F(0) has three main subunits: a(1), b(2) and c(10-14). The alpha and beta chains form an alternating ring which encloses part of the gamma chain. F(1) is attached to F(0) by a central stalk formed by the gamma and epsilon chains, while a peripheral stalk is formed by the delta and b chains.

The protein localises to the cell membrane. Functionally, f(1)F(0) ATP synthase produces ATP from ADP in the presence of a proton or sodium gradient. F-type ATPases consist of two structural domains, F(1) containing the extramembraneous catalytic core and F(0) containing the membrane proton channel, linked together by a central stalk and a peripheral stalk. During catalysis, ATP synthesis in the catalytic domain of F(1) is coupled via a rotary mechanism of the central stalk subunits to proton translocation. Its function is as follows. Key component of the F(0) channel; it plays a direct role in translocation across the membrane. A homomeric c-ring of between 10-14 subunits forms the central stalk rotor element with the F(1) delta and epsilon subunits. The polypeptide is ATP synthase subunit c (Clostridium acetobutylicum (strain ATCC 824 / DSM 792 / JCM 1419 / IAM 19013 / LMG 5710 / NBRC 13948 / NRRL B-527 / VKM B-1787 / 2291 / W)).